Here is a 783-residue protein sequence, read N- to C-terminus: Ras and Rab interactor 1 (783 aa).

Met-1 bears the N-acetylmethionine mark. A disordered region spans residues 1-53 (MESPGESGAGSPGAPSPSSFTTGHLAREKPAQDPLYDVPNASGGQAGGPQRPG). 2 positions are modified to phosphoserine: Ser-3 and Ser-16. Residue Tyr-36 is modified to Phosphotyrosine; by ABL1 and ABL2. In terms of domain architecture, SH2 spans 69-163 (WLQLQANAAA…ILLLPLQLPR (95 aa)). Ser-210, Ser-258, Ser-333, and Ser-337 each carry phosphoserine. Disordered stretches follow at residues 250–282 (STETSSPLSPPAVPPPPVPVLPGAVPSQTERLP) and 295–342 (YRVP…HLGR). Residues 257–269 (LSPPAVPPPPVPV) are compositionally biased toward pro residues. Residues 294–727 (GYRVPAGSGP…GSGQSEARSR (434 aa)) form a ras and 14-3-3 protein binding region region. A compositionally biased stretch (low complexity) spans 317-334 (GSPSSSEEEGVPGSRGSP). Ser-351 is subject to Phosphoserine; by PKD/PRKD1. One can recognise a VPS9 domain in the interval 456 to 598 (LAADGSLGRL…LSGLGQAHTL (143 aa)). Phosphoserine occurs at positions 609 and 611. The Ras-associating domain maps to 624–706 (FQHLLRVAYQ…GYLVYRRAEW (83 aa)). Arg-692 carries the omega-N-methylarginine modification. The segment at 709 to 783 (TQGAVTEEEG…EAEGSRAAEE (75 aa)) is disordered. The segment covering 762–772 (QAQEGPAQPGE) has biased composition (low complexity).

The protein belongs to the RIN (Ras interaction/interference) family. Interacts with the GTP-bound form of Ras proteins (NRAS, HRAS and KRAS). This interaction prevents the association between RAF1 and Ras. Interacts with 14-3-3 proteins YWHAB, YWHAE and YWHAZ when phosphorylated on Ser-351. Interacts with the SH3 domain of ABL1 and ABL2. Interacts with RAB5A. The interaction with Ras is probably regulated and antagonized by the interaction with 14-3-3 proteins. The interaction with 14-3-3 proteins is regulated by phosphorylation on Ser-351. In terms of processing, phosphorylated on tyrosine residues by ABL1 and ABL2. Phosphorylation at Ser-351 by PRKD1 induces interaction with 14-3-3 proteins. As to expression, expressed in all tissues examined with high levels in brain, placenta and pancreas.

Its subcellular location is the cytoplasm. The protein resides in the membrane. It localises to the cytoskeleton. Ras effector protein, which may serve as an inhibitory modulator of neuronal plasticity in aversive memory formation. Can affect Ras signaling at different levels. First, by competing with RAF1 protein for binding to activated Ras. Second, by enhancing signaling from ABL1 and ABL2, which regulate cytoskeletal remodeling. Third, by activating RAB5A, possibly by functioning as a guanine nucleotide exchange factor (GEF) for RAB5A, by exchanging bound GDP for free GTP, and facilitating Ras-activated receptor endocytosis. The polypeptide is Ras and Rab interactor 1 (RIN1) (Homo sapiens (Human)).